Consider the following 490-residue polypeptide: Cysteine desulfurase, mitochondrial (490 aa).

Residues 161 to 162 (AT), Asn241, Gln269, and 289 to 291 (SSH) each bind pyridoxal 5'-phosphate. Lys292 carries the post-translational modification N6-(pyridoxal phosphate)lysine. Thr329 is a binding site for pyridoxal 5'-phosphate. Catalysis depends on Cys414, which acts as the Cysteine persulfide intermediate. Cys414 contributes to the [2Fe-2S] cluster binding site.

It belongs to the class-V pyridoxal-phosphate-dependent aminotransferase family. NifS/IscS subfamily. Pyridoxal 5'-phosphate is required as a cofactor.

The protein resides in the mitochondrion. It catalyses the reaction (sulfur carrier)-H + L-cysteine = (sulfur carrier)-SH + L-alanine. Its function is as follows. Catalyzes the removal of elemental sulfur from cysteine to produce alanine. It supplies the inorganic sulfur for iron-sulfur (Fe-S) clusters. Plays a role in both tRNA-processing and mitochondrial metabolism. Involved in the 2-thio-modification of both 5-carboxymethylaminomethyl-2-thiouridine in mitochondrial tRNAs and 5-methoxycarbonylmethyl-2-thiouridine (mcm5s2U) in cytoplasmic tRNAs. This is Cysteine desulfurase, mitochondrial from Eremothecium gossypii (strain ATCC 10895 / CBS 109.51 / FGSC 9923 / NRRL Y-1056) (Yeast).